We begin with the raw amino-acid sequence, 241 residues long: MALLPFTLPLAELEVGHHLYWQIGNLNLHGQIFLSSWILIGALLAFVLVGTKNLSRDPKGAQNLLEFLWDYIRDLSRDQIGEKYYREWLPFIGTLFLFIFVSNWGGALIPWKVIELPEGELGAPTADINTTVAMALLVTLAYFYAGLSKKGWRFFELYVEPTPIMLPFKIIEEFTKPLSLSFRLFGNILADELAVGVLVYLVPLIVPLPVMLLGLFTSAIQALIFATLAAFYIGEGLHEAH.

The next 5 helical transmembrane spans lie at 30–50 (GQIF…VLVG), 89–109 (LPFI…GALI), 128–148 (INTT…AGLS), 193–213 (LAVG…VMLL), and 214–234 (GLFT…FYIG).

This sequence belongs to the ATPase A chain family. In terms of assembly, F-type ATPases have 2 components, CF(1) - the catalytic core - and CF(0) - the membrane proton channel. CF(1) has five subunits: alpha(3), beta(3), gamma(1), delta(1), epsilon(1). CF(0) has four main subunits: a, b, b' and c.

The protein resides in the cellular thylakoid membrane. In terms of biological role, key component of the proton channel; it plays a direct role in the translocation of protons across the membrane. This Synechococcus sp. (strain CC9311) protein is ATP synthase subunit a.